A 199-amino-acid polypeptide reads, in one-letter code: Recombination protein RecR (199 aa).

The segment at C57–C72 adopts a C4-type zinc-finger fold. Residues S80–A176 form the Toprim domain.

Belongs to the RecR family.

Its function is as follows. May play a role in DNA repair. It seems to be involved in an RecBC-independent recombinational process of DNA repair. It may act with RecF and RecO. This chain is Recombination protein RecR, found in Lactobacillus johnsonii (strain CNCM I-12250 / La1 / NCC 533).